The sequence spans 213 residues: BREX protein BrxA (213 aa).

It belongs to the BrxA family.

Its function is as follows. BREX systems (bacteriophage exclusion) provide immunity against bacteriophage. A probably non-essential part of a type 1 BREX system which protects against dsDNA phage. This system allows phage adsorption but prevents phage DNA replication, without degradation of the phage DNA. Methylation of bacterial DNA by PglX guides self/non-self discrimination. When the brxA-brxB-brxC-pglX-pglZ-brxL genes are transformed into a susceptible E.coli strain (BW25113) they confer very high resistance to infection by bacteriophage VR7 and VpaE1, about 100-fold protection against lambda, T5 and T7 and no protection against RNA phage Qbeta, ssDNA phage M13 or dSDNA phage T4 and VR5. Glycosylated phage DNA is not susceptible to BREX. The BREX system does not confer resistance to lysogenic lambda phage, i.e. prophage that are integrated into the chromosomal DNA and then induced to form phage. The protein is BREX protein BrxA of Escherichia coli O9:H4 (strain HS).